Consider the following 144-residue polypeptide: Large ribosomal subunit protein uL13 (144 aa).

This sequence belongs to the universal ribosomal protein uL13 family. In terms of assembly, part of the 50S ribosomal subunit.

In terms of biological role, this protein is one of the early assembly proteins of the 50S ribosomal subunit, although it is not seen to bind rRNA by itself. It is important during the early stages of 50S assembly. This Buchnera aphidicola subsp. Baizongia pistaciae (strain Bp) protein is Large ribosomal subunit protein uL13.